Consider the following 238-residue polypeptide: Probable septum site-determining protein MinC (238 aa).

It belongs to the MinC family. As to quaternary structure, interacts with MinD and FtsZ.

In terms of biological role, cell division inhibitor that blocks the formation of polar Z ring septums. Rapidly oscillates between the poles of the cell to destabilize FtsZ filaments that have formed before they mature into polar Z rings. Prevents FtsZ polymerization. This is Probable septum site-determining protein MinC from Xylella fastidiosa (strain M12).